The primary structure comprises 33 residues: Rugosin-A (33 aa).

C27 and C33 are joined by a disulfide.

The protein belongs to the frog skin active peptide (FSAP) family. Brevinin subfamily. Expressed by the skin glands.

It is found in the secreted. Its function is as follows. Has antibacterial activity against Gram-positive bacteria. The polypeptide is Rugosin-A (Glandirana rugosa (Japanese wrinkled frog)).